Here is a 334-residue protein sequence, read N- to C-terminus: Ferredoxin--NADP reductase (334 aa).

FAD-binding residues include aspartate 33, glutamine 41, tyrosine 46, alanine 86, phenylalanine 120, aspartate 286, and threonine 327.

Belongs to the ferredoxin--NADP reductase type 2 family. As to quaternary structure, homodimer. The cofactor is FAD.

It catalyses the reaction 2 reduced [2Fe-2S]-[ferredoxin] + NADP(+) + H(+) = 2 oxidized [2Fe-2S]-[ferredoxin] + NADPH. This is Ferredoxin--NADP reductase from Rickettsia typhi (strain ATCC VR-144 / Wilmington).